We begin with the raw amino-acid sequence, 115 residues long: Large ribosomal subunit protein bL20 (115 aa).

It belongs to the bacterial ribosomal protein bL20 family.

Functionally, binds directly to 23S ribosomal RNA and is necessary for the in vitro assembly process of the 50S ribosomal subunit. It is not involved in the protein synthesizing functions of that subunit. The sequence is that of Large ribosomal subunit protein bL20 from Prochlorococcus marinus (strain MIT 9215).